The chain runs to 379 residues: Early boundary activity protein 3 (379 aa).

As to quaternary structure, the heterotrimeric Elba complex consists of Elba1, Elba2 and Elba3.

Its subcellular location is the nucleus. The heterotrimeric Elba complex is required for chromatin domain boundary function during early embryogenesis. It binds to a 8-bp sequence 5'-CCAATAAG-3' in the Fab-7 insulator or boundary element in the bithorax complex and contributes to its insulator or boundary activity. Elba3 lacks DNA-binding activity and plays the role of an adapter protein, bringing Elba1 and 2 together, thereby establishing a complex that recognizes the asymmetric sequence motif through the BEN domains of Elba1 and 2. The polypeptide is Early boundary activity protein 3 (Drosophila melanogaster (Fruit fly)).